A 592-amino-acid chain; its full sequence is Frizzled-9 (592 aa).

The first 23 residues, 1-23 (MAVPPLLRGALLLWQLLATGGAA), serve as a signal peptide directing secretion. Over 24-230 (LEIGRFDPER…EVFWSRRDKD (207 aa)) the chain is Extracellular. One can recognise an FZ domain in the interval 35–156 (RGPAPCQAME…NDPHALCMEA (122 aa)). 5 disulfide bridges follow: C40–C101, C48–C94, C85–C123, C112–C153, and C116–C140. The tract at residues 59 to 173 (PNLLGHTSQG…PTEPHKGLGM (115 aa)) is required for Wnt-activated receptor activity. A helical transmembrane segment spans residues 231–251 (FALVWMAVWSALCFFSTAFTV). Residues 252–267 (FTFLLEPHRFQYPERP) lie on the Cytoplasmic side of the membrane. Residues 268–288 (IIFLSMCYNVYSLAFLIRAVA) form a helical membrane-spanning segment. Residues 289 to 314 (GAQSVACDQEAGALYVIQEGLENTGC) are Extracellular-facing. The chain crosses the membrane as a helical span at residues 315-335 (TLVFLLLYYFGMASSLWWVVL). Residues 336–356 (TLTWFLAAGKKWGHEAIEAHG) are Cytoplasmic-facing. The chain crosses the membrane as a helical span at residues 357-377 (SYFHMAAWGLPALKTIVVLTL). At 378–401 (RKVAGDELTGLCYVASMDPAALTG) the chain is on the extracellular side. The chain crosses the membrane as a helical span at residues 402–422 (FVLVPLSCYLVLGTSFLLTGF). The Cytoplasmic segment spans residues 423-448 (VALFHIRKIMKTGGTNTEKLEKLMVK). A helical transmembrane segment spans residues 449-469 (IGVFSILYTVPATCVIVCYVY). The Extracellular portion of the chain corresponds to 470-509 (ERLNMDFWRLRATEQPCTAAAVPGGRRDCSLPGGSVPTVA). Residues 510 to 530 (VFMLKIFMSLVVGITSGVWVW) form a helical membrane-spanning segment. The Cytoplasmic portion of the chain corresponds to 531–592 (SSKTFQTWQS…DPSLENPTHL (62 aa)). Residues 533–538 (KTFQTW) carry the Lys-Thr-X-X-X-Trp motif, mediates interaction with the PDZ domain of Dvl family members motif. The tract at residues 555-592 (ACRTPGGYGRGTHCHYKAPTVVLHMTKTDPSLENPTHL) is required for CTNNB1 accumulation and TCF transcription factor activity.

Belongs to the G-protein coupled receptor Fz/Smo family. Post-translationally, ubiquitinated by ZNRF3, leading to its degradation by the proteasome.

The protein localises to the cell membrane. Its function is as follows. Receptor for WNT2 that is coupled to the beta-catenin canonical signaling pathway, which leads to the activation of disheveled proteins, inhibition of GSK-3 kinase, nuclear accumulation of beta-catenin and activation of Wnt target genes. Plays a role in neuromuscular junction (NMJ) assembly by negatively regulating the clustering of acetylcholine receptors (AChR) through the beta-catenin canonical signaling pathway. May play a role in neural progenitor cells (NPCs) viability through the beta-catenin canonical signaling pathway by negatively regulating cell cycle arrest leading to inhibition of neuron apoptotic process. During hippocampal development, regulates neuroblast proliferation and apoptotic cell death. Controls bone formation through non canonical Wnt signaling mediated via ISG15. Positively regulates bone regeneration through non canonical Wnt signaling. The chain is Frizzled-9 from Rattus norvegicus (Rat).